The chain runs to 261 residues: Phosphoadenosine phosphosulfate reductase (261 aa).

The protein belongs to the PAPS reductase family. CysH subfamily.

It carries out the reaction [thioredoxin]-disulfide + sulfite + adenosine 3',5'-bisphosphate + 2 H(+) = [thioredoxin]-dithiol + 3'-phosphoadenylyl sulfate. It functions in the pathway sulfur metabolism; hydrogen sulfide biosynthesis; sulfite from sulfate: step 3/3. In terms of biological role, the NADP dependent reduction of PAPS into sulfite involves thioredoxin which probably plays the role of a thiol carrier. The chain is Phosphoadenosine phosphosulfate reductase (MET16) from Saccharomyces cerevisiae (strain ATCC 204508 / S288c) (Baker's yeast).